The primary structure comprises 822 residues: MSDSTNLTIAEETLALLEWPRLCQHLSTFTQTPLGAIAARYLLPPSQWEESRELLAQTQAVESIENSPESNWHFKGIADITEPLARVERGGLVTGLELLAIAGTLAGVRRLRRVIEERDDLEILQTLVAEVRTLPELEQAIHHCLGEDGKVAERASPKLGEIRQKLKAVREQIQQKLQKIIQRQSNALQEAVITQRGDRFVLPIKAGYKEQMPGIVHDSSASGNTLYVEPQAIVELGNKLRQARRQEQTEEERILRQLSDQVLEVLLDLEHLLAIATRLDLATARVRYSFWLGAHPPQWLTPGDEKPITLRQLRHPLLHWQAEKEGGPAVVPITLTIDSQIRVIAITGPNTGGKTVTLKTLGLVALMAKVGLYIPAKETVEMPWFAQILADIGDEQSLQQNLSTFSGHICRIIRILQALPSGVQDVLDPEIDSPNHPIFPSLVLLDEVGAGTDPTEGSALAIALLRHLADQPCLTVATTHYGELKALKYQDARFENASVEFDDQSLSPTYRLLWGIPGRSNALAIAQRLGLPLAIVEQAKDKLGGFSEDINQVIAGLESQRREQEQKAANAQKLLQETEIFYQQVSQKAASLQARERELKSYQDQEVQQAIAAAKEEIAKVIRQLQRGKPSAQKAQQATEILGQIQAEQKAKVAPKPIGYQPTVGERIRIPSFGQTAEVTQVNATAQTVNVTLGLMKMTVPMADIESLNGKKVEPPPKSEPVPKKVKAEPPATEAKSPPVLVRTEKNTLDCRGDRLERAESRLEKALNQALDAGVLWIIHGKGTGKLRQGVQEYLSHHPLVKSYALAPQNDGGAGVTIAYLR.

ATP is bound at residue 348 to 355; that stretch reads GPNTGGKT. The interval 707-737 is disordered; the sequence is SLNGKKVEPPPKSEPVPKKVKAEPPATEAKS. The segment covering 709 to 728 has biased composition (basic and acidic residues); the sequence is NGKKVEPPPKSEPVPKKVKA. A Smr domain is found at 749–822; sequence LDCRGDRLER…GAGVTIAYLR (74 aa).

Belongs to the DNA mismatch repair MutS family. MutS2 subfamily. As to quaternary structure, homodimer. Binds to stalled ribosomes, contacting rRNA.

Functionally, endonuclease that is involved in the suppression of homologous recombination and thus may have a key role in the control of bacterial genetic diversity. In terms of biological role, acts as a ribosome collision sensor, splitting the ribosome into its 2 subunits. Detects stalled/collided 70S ribosomes which it binds and splits by an ATP-hydrolysis driven conformational change. Acts upstream of the ribosome quality control system (RQC), a ribosome-associated complex that mediates the extraction of incompletely synthesized nascent chains from stalled ribosomes and their subsequent degradation. Probably generates substrates for RQC. The polypeptide is Endonuclease MutS2 (Synechocystis sp. (strain ATCC 27184 / PCC 6803 / Kazusa)).